Consider the following 967-residue polypeptide: Cytosolic carboxypeptidase 2 (967 aa).

The region spanning 330 to 601 is the Peptidase M14 domain; sequence YPYTYSDLQR…HFCDTLLDYC (272 aa). His396, Glu399, and His492 together coordinate Zn(2+). The active-site Proton donor/acceptor is the Glu565. Disordered regions lie at residues 679-706 and 944-967; these read KRRL…LHEA and PGIS…NTMK. Residues 946–967 show a composition bias toward polar residues; it reads ISSSEPHFPNSSEDITVRNTMK.

Belongs to the peptidase M14 family. Zn(2+) serves as cofactor.

The protein resides in the cytoplasm. It localises to the cytosol. Its subcellular location is the cytoskeleton. The protein localises to the microtubule organizing center. It is found in the centrosome. The protein resides in the centriole. It localises to the cilium basal body. It carries out the reaction (L-glutamyl)(n+1)-gamma-L-glutamyl-L-glutamyl-[protein] + H2O = (L-glutamyl)(n)-gamma-L-glutamyl-L-glutamyl-[protein] + L-glutamate. Metallocarboxypeptidase that mediates deglutamylation of target proteins. Catalyzes the deglutamylation of polyglutamate side chains generated by post-translational polyglutamylation in proteins such as tubulins. Also removes gene-encoded polyglutamates from the carboxy-terminus of target proteins such as MYLK. Does not show detyrosinase or deglycylase activities from the carboxy-terminus of tubulin. Functionally, metallocarboxypeptidase that mediates deglutamylation of tubulin and non-tubulin target proteins. Catalyzes the removal of polyglutamate side chains present on the gamma-carboxyl group of glutamate residues within the C-terminal tail of tubulin protein. Specifically cleaves tubulin long-side-chains, while it is not able to remove the branching point glutamate. Also catalyzes the removal of polyglutamate residues from the carboxy-terminus of non-tubulin proteins. This Xenopus tropicalis (Western clawed frog) protein is Cytosolic carboxypeptidase 2 (agbl2).